A 160-amino-acid polypeptide reads, in one-letter code: MSIMKKPDLSDPKLRAKLAQNMGHNYYGEPAWPNDILFTFPICIAGTIGLITGLAILDPAMIGEPGNPFATPLEILPEWYLYPVFQILRVLPNKLLGIACQGAIPLGLMMVPFIESVNKFQNPFRRPVAMAVFLFGTAVTLWLGAGACFPIDESLTLGLF.

The next 3 helical transmembrane spans lie at isoleucine 36 to isoleucine 56, leucine 95 to glutamate 115, and alanine 131 to isoleucine 151.

It belongs to the cytochrome b family. PetD subfamily. As to quaternary structure, the 4 large subunits of the cytochrome b6-f complex are cytochrome b6, subunit IV (17 kDa polypeptide, PetD), cytochrome f and the Rieske protein, while the 4 small subunits are PetG, PetL, PetM and PetN. The complex functions as a dimer.

Its subcellular location is the cellular thylakoid membrane. Its function is as follows. Component of the cytochrome b6-f complex, which mediates electron transfer between photosystem II (PSII) and photosystem I (PSI), cyclic electron flow around PSI, and state transitions. The chain is Cytochrome b6-f complex subunit 4 from Picosynechococcus sp. (strain ATCC 27264 / PCC 7002 / PR-6) (Agmenellum quadruplicatum).